Reading from the N-terminus, the 212-residue chain is Methylthioribulose-1-phosphate dehydratase (212 aa).

Positions 97 and 99 each coordinate Zn(2+).

This sequence belongs to the aldolase class II family. MtnB subfamily. In terms of assembly, homotetramer. Requires Zn(2+) as cofactor.

The enzyme catalyses 5-(methylsulfanyl)-D-ribulose 1-phosphate = 5-methylsulfanyl-2,3-dioxopentyl phosphate + H2O. It functions in the pathway amino-acid biosynthesis; L-methionine biosynthesis via salvage pathway; L-methionine from S-methyl-5-thio-alpha-D-ribose 1-phosphate: step 2/6. In terms of biological role, catalyzes the dehydration of methylthioribulose-1-phosphate (MTRu-1-P) into 2,3-diketo-5-methylthiopentyl-1-phosphate (DK-MTP-1-P). The chain is Methylthioribulose-1-phosphate dehydratase from Bacillus cereus (strain G9842).